Consider the following 292-residue polypeptide: MSYIPFPDISPEIFSVELFGATFALRWYALAYIAGLLIGWRLVLRMIRSDRLWTFGAPMTEDQLERLLTWVILGVILGGRLGFVLFYQPSHYLAHPLDALKVWEGGMSFHGGFLGVMVAVIAFCLRERISILPVADLLAAATPPGLFLGRIANFINAELWGRPTTLPWGVAFPGEAAQTCPGIEGICARHPSQLYEAALEGIVLFAILAILIWRRGWLRWPGAVTGAFLAGYGCARFLVEFVRQPDAQFVTPGNPLGLAWEIGGYGLTMGQILSLPMILLGLYFMLRARRTA.

A run of 4 helical transmembrane segments spans residues 18–38, 67–87, 105–125, and 129–149; these read LFGA…GLLI, LLTW…VLFY, GGMS…AFCL, and ISIL…LFLG. Arg150 contributes to the a 1,2-diacyl-sn-glycero-3-phospho-(1'-sn-glycerol) binding site. The next 3 membrane-spanning stretches (helical) occupy residues 193 to 213, 222 to 242, and 266 to 286; these read QLYE…ILIW, GAVT…VEFV, and GLTM…YFML.

It belongs to the Lgt family.

Its subcellular location is the cell inner membrane. It catalyses the reaction L-cysteinyl-[prolipoprotein] + a 1,2-diacyl-sn-glycero-3-phospho-(1'-sn-glycerol) = an S-1,2-diacyl-sn-glyceryl-L-cysteinyl-[prolipoprotein] + sn-glycerol 1-phosphate + H(+). The protein operates within protein modification; lipoprotein biosynthesis (diacylglyceryl transfer). Its function is as follows. Catalyzes the transfer of the diacylglyceryl group from phosphatidylglycerol to the sulfhydryl group of the N-terminal cysteine of a prolipoprotein, the first step in the formation of mature lipoproteins. The sequence is that of Phosphatidylglycerol--prolipoprotein diacylglyceryl transferase from Cereibacter sphaeroides (strain ATCC 17025 / ATH 2.4.3) (Rhodobacter sphaeroides).